An 86-amino-acid polypeptide reads, in one-letter code: Exodeoxyribonuclease 7 small subunit (86 aa).

The disordered stretch occupies residues 1–26 (MQDELFETEKAPQKNTKNAKNAPKKS).

The protein belongs to the XseB family. Heterooligomer composed of large and small subunits.

Its subcellular location is the cytoplasm. The enzyme catalyses Exonucleolytic cleavage in either 5'- to 3'- or 3'- to 5'-direction to yield nucleoside 5'-phosphates.. Functionally, bidirectionally degrades single-stranded DNA into large acid-insoluble oligonucleotides, which are then degraded further into small acid-soluble oligonucleotides. The sequence is that of Exodeoxyribonuclease 7 small subunit from Helicobacter pylori (strain HPAG1).